Consider the following 161-residue polypeptide: MEYNTSELCDMYLDVVDVVEPMFSNYGGCSSFGGSISTIKCFEDNGLITDVLQEDGQGKVLLVDGGGSLRRALIDGTIAELAVSNNWEGIIVYGSVRDVDALEELDIGIQALASIPVGADGNSVGEVDIPVNFGGVTFLPGDHIYADNTGIILSPEPLDIE.

The protein belongs to the RraA family. As to quaternary structure, homotrimer. Binds to both RNA-binding sites in the C-terminal region of Rne and to RhlB.

The protein resides in the cytoplasm. Functionally, globally modulates RNA abundance by binding to RNase E (Rne) and regulating its endonucleolytic activity. Can modulate Rne action in a substrate-dependent manner by altering the composition of the degradosome. Modulates RNA-binding and helicase activities of the degradosome. This Shewanella oneidensis (strain ATCC 700550 / JCM 31522 / CIP 106686 / LMG 19005 / NCIMB 14063 / MR-1) protein is Regulator of ribonuclease activity A.